Consider the following 403-residue polypeptide: Protein-glutamate methylesterase/protein-glutamine glutaminase (403 aa).

A Response regulatory domain is found at 8-126; the sequence is AVLIVDDSAL…SAHLRTVSRK (119 aa). Residue Asp59 is modified to 4-aspartylphosphate. Residues 204-393 enclose the CheB-type methylesterase domain; sequence PLRESGALQI…VSLDDMAATI (190 aa). Catalysis depends on residues Ser219, His246, and Asp342.

It belongs to the CheB family. In terms of processing, phosphorylated by CheA. Phosphorylation of the N-terminal regulatory domain activates the methylesterase activity.

It localises to the cytoplasm. The catalysed reaction is [protein]-L-glutamate 5-O-methyl ester + H2O = L-glutamyl-[protein] + methanol + H(+). The enzyme catalyses L-glutaminyl-[protein] + H2O = L-glutamyl-[protein] + NH4(+). Its function is as follows. Involved in chemotaxis. Part of a chemotaxis signal transduction system that modulates chemotaxis in response to various stimuli. Catalyzes the demethylation of specific methylglutamate residues introduced into the chemoreceptors (methyl-accepting chemotaxis proteins or MCP) by CheR. Also mediates the irreversible deamidation of specific glutamine residues to glutamic acid. The protein is Protein-glutamate methylesterase/protein-glutamine glutaminase of Treponema pallidum (strain Nichols).